The following is a 483-amino-acid chain: Glutamate--tRNA ligase (483 aa).

The short motif at 11-21 is the 'HIGH' region element; it reads PSPTGLLHIGN. Residues 255–259 carry the 'KMSKS' region motif; it reads KLSKR. An ATP-binding site is contributed by K258.

Belongs to the class-I aminoacyl-tRNA synthetase family. Glutamate--tRNA ligase type 1 subfamily. Monomer.

It is found in the cytoplasm. The enzyme catalyses tRNA(Glu) + L-glutamate + ATP = L-glutamyl-tRNA(Glu) + AMP + diphosphate. Functionally, catalyzes the attachment of glutamate to tRNA(Glu) in a two-step reaction: glutamate is first activated by ATP to form Glu-AMP and then transferred to the acceptor end of tRNA(Glu). The polypeptide is Glutamate--tRNA ligase (Lactococcus lactis subsp. cremoris (strain SK11)).